The chain runs to 30 residues: U1-poneritoxin-Ni3d (30 aa).

Belongs to the ponericin-G family. Expressed by the venom gland.

It is found in the secreted. Functionally, has activity against some Gram-positive bacteria and S.cerevisiae. Has a non-hemolytic activity. In Neoponera inversa (Ant), this protein is U1-poneritoxin-Ni3d.